The sequence spans 425 residues: Serine hydroxymethyltransferase (425 aa).

(6S)-5,6,7,8-tetrahydrofolate-binding positions include L122 and 126–128 (GHL). N6-(pyridoxal phosphate)lysine is present on K231. Position 355-357 (355-357 (SPF)) interacts with (6S)-5,6,7,8-tetrahydrofolate.

Belongs to the SHMT family. In terms of assembly, homodimer. Pyridoxal 5'-phosphate serves as cofactor.

It is found in the cytoplasm. It carries out the reaction (6R)-5,10-methylene-5,6,7,8-tetrahydrofolate + glycine + H2O = (6S)-5,6,7,8-tetrahydrofolate + L-serine. Its pathway is one-carbon metabolism; tetrahydrofolate interconversion. It functions in the pathway amino-acid biosynthesis; glycine biosynthesis; glycine from L-serine: step 1/1. Catalyzes the reversible interconversion of serine and glycine with tetrahydrofolate (THF) serving as the one-carbon carrier. This reaction serves as the major source of one-carbon groups required for the biosynthesis of purines, thymidylate, methionine, and other important biomolecules. Also exhibits THF-independent aldolase activity toward beta-hydroxyamino acids, producing glycine and aldehydes, via a retro-aldol mechanism. The polypeptide is Serine hydroxymethyltransferase (Rippkaea orientalis (strain PCC 8801 / RF-1) (Cyanothece sp. (strain PCC 8801))).